We begin with the raw amino-acid sequence, 469 residues long: Coiled-coil domain-containing protein 6 (469 aa).

Acidic residues predominate over residues 1-10; sequence MADSASESDT. A disordered region spans residues 1-37; that stretch reads MADSASESDTDAAGGGPAAMQSSCSATSGGSGGGGGG. The residue at position 2 (Ala-2) is an N-acetylalanine. Ser-45 is modified (phosphoserine). Positions 47 to 320 form a coiled coil; sequence FRLEELTNRL…LCRQLSESES (274 aa). Tandem repeats lie at residues 99 to 127, 128 to 156, and 157 to 185. The tract at residues 99–228 is 5 X 29 AA tandem repeats; it reads EQEEEFISNT…AEKRILQEKL (130 aa). Residues 186-199 form a 4; approximate repeat; that stretch reads EQLRREKIDLENTL. Copy 5 of the repeat occupies 200-228; that stretch reads EQEQEALVNRLWKRMDKLEAEKRILQEKL. 6 positions are modified to phosphoserine: Ser-233, Ser-237, Ser-242, Ser-247, Ser-277, and Ser-316. Residues 335–362 are disordered; the sequence is AQGLRPRTVSSPIPYTPSPSSSRPISPG. Thr-342 is subject to Phosphothreonine. A compositionally biased stretch (low complexity) spans 344–361; that stretch reads SSPIPYTPSPSSSRPISP. Ser-356 and Ser-360 each carry phosphoserine. Arg-380 is modified (omega-N-methylarginine). Phosphoserine is present on residues Ser-388 and Ser-406. The disordered stretch occupies residues 394 to 469; it reads QHMGASHGIT…QHPVHPSSQP (76 aa). A compositionally biased stretch (pro residues) spans 419–444; that stretch reads PTPPPSPNTQSPVQPPPPPPPPPMQP. The SH3-binding signature appears at 435–444; the sequence is PPPPPPPMQP. Low complexity predominate over residues 460-469; sequence QHPVHPSSQP.

Its subcellular location is the cytoplasm. It localises to the cytoskeleton. The chain is Coiled-coil domain-containing protein 6 (Ccdc6) from Mus musculus (Mouse).